A 274-amino-acid polypeptide reads, in one-letter code: Pyrroline-5-carboxylate reductase 3 (274 aa).

Ala2 is subject to N-acetylalanine.

This sequence belongs to the pyrroline-5-carboxylate reductase family. Homodecamer; composed of 5 homodimers.

It localises to the cytoplasm. It catalyses the reaction L-proline + NADP(+) = (S)-1-pyrroline-5-carboxylate + NADPH + 2 H(+). The enzyme catalyses L-proline + NAD(+) = (S)-1-pyrroline-5-carboxylate + NADH + 2 H(+). The protein operates within amino-acid biosynthesis; L-proline biosynthesis; L-proline from L-glutamate 5-semialdehyde: step 1/1. Its function is as follows. Oxidoreductase that catalyzes the last step in proline biosynthesis, which corresponds to the reduction of pyrroline-5-carboxylate (P5C) to L-proline using NAD(P)H. Proline is synthesized from either glutamate or ornithine; both are converted to P5C, and then to proline via pyrroline-5-carboxylate reductases (PYCRs). PYCR3 is exclusively linked to the biosynthesis of proline from ornithine. The protein is Pyrroline-5-carboxylate reductase 3 of Rattus norvegicus (Rat).